A 189-amino-acid polypeptide reads, in one-letter code: MGDKIFHNLSGKTLVATPHVITKGIYHKSLIYMLSHTEEGAIGLIFNRLVNHIDLKSFFKIKNDKITTPVMVPIYLGGPIEHEKGFFLHSSDYNKNLLLDFHNDLAVSSNLEISEDIAFGKGPKNSLFIVGYTAWKPGQLEEELEKNLWLVMDCNKEFIFADNPESKWHNALKHLGIDEIHFSSQIGNA.

This sequence belongs to the UPF0301 (AlgH) family.

In Rickettsia massiliae (strain Mtu5), this protein is UPF0301 protein RMA_0049.